The chain runs to 895 residues: uncharacterized protein (895 aa).

The tract at residues 257-283 (KSHKYPPGPPDNSSSNTSGQQNTSNTS) is disordered. Residues 268–283 (NSSSNTSGQQNTSNTS) show a composition bias toward low complexity.

This is an uncharacterized protein from Acanthamoeba polyphaga mimivirus (APMV).